Consider the following 339-residue polypeptide: Foldase protein PrsA (339 aa).

The signal sequence occupies residues 1–26; that stretch reads MKHLKNNTKKFTALLFALLFSMSIAG. Cys27 carries the N-palmitoyl cysteine lipid modification. Residue Cys27 is the site of S-diacylglycerol cysteine attachment. Positions 197–287 constitute a PpiC domain; that stretch reads KPTFHAQHVL…FGYHVIKLID (91 aa).

The protein belongs to the PrsA family.

It is found in the cell membrane. It carries out the reaction [protein]-peptidylproline (omega=180) = [protein]-peptidylproline (omega=0). Its function is as follows. Plays a major role in protein secretion by helping the post-translocational extracellular folding of several secreted proteins. The polypeptide is Foldase protein PrsA (Clostridium tetani (strain Massachusetts / E88)).